A 308-amino-acid polypeptide reads, in one-letter code: Mu-like prophage FluMu major head subunit (308 aa).

The protein to phage Mu protein T.

The protein is Mu-like prophage FluMu major head subunit of Haemophilus influenzae (strain ATCC 51907 / DSM 11121 / KW20 / Rd).